A 341-amino-acid chain; its full sequence is tRNA N6-adenosine threonylcarbamoyltransferase (341 aa).

Fe cation contacts are provided by histidine 111 and histidine 115. Residues 134 to 138 (LVSGG), aspartate 167, glycine 180, and asparagine 276 each bind substrate. A Fe cation-binding site is contributed by aspartate 304.

It belongs to the KAE1 / TsaD family. Fe(2+) is required as a cofactor.

The protein resides in the cytoplasm. The catalysed reaction is L-threonylcarbamoyladenylate + adenosine(37) in tRNA = N(6)-L-threonylcarbamoyladenosine(37) in tRNA + AMP + H(+). Functionally, required for the formation of a threonylcarbamoyl group on adenosine at position 37 (t(6)A37) in tRNAs that read codons beginning with adenine. Is involved in the transfer of the threonylcarbamoyl moiety of threonylcarbamoyl-AMP (TC-AMP) to the N6 group of A37, together with TsaE and TsaB. TsaD likely plays a direct catalytic role in this reaction. The protein is tRNA N6-adenosine threonylcarbamoyltransferase of Pseudomonas aeruginosa (strain ATCC 15692 / DSM 22644 / CIP 104116 / JCM 14847 / LMG 12228 / 1C / PRS 101 / PAO1).